The sequence spans 111 residues: uncharacterized protein (111 aa).

This is an uncharacterized protein from Streptomyces coelicolor (strain ATCC BAA-471 / A3(2) / M145).